The sequence spans 247 residues: 1-(5-phosphoribosyl)-5-[(5-phosphoribosylamino)methylideneamino] imidazole-4-carboxamide isomerase (247 aa).

Asp-8 (proton acceptor) is an active-site residue. Asp-130 (proton donor) is an active-site residue.

The protein belongs to the HisA/HisF family.

Its subcellular location is the cytoplasm. The catalysed reaction is 1-(5-phospho-beta-D-ribosyl)-5-[(5-phospho-beta-D-ribosylamino)methylideneamino]imidazole-4-carboxamide = 5-[(5-phospho-1-deoxy-D-ribulos-1-ylimino)methylamino]-1-(5-phospho-beta-D-ribosyl)imidazole-4-carboxamide. Its pathway is amino-acid biosynthesis; L-histidine biosynthesis; L-histidine from 5-phospho-alpha-D-ribose 1-diphosphate: step 4/9. The protein is 1-(5-phosphoribosyl)-5-[(5-phosphoribosylamino)methylideneamino] imidazole-4-carboxamide isomerase of Stutzerimonas stutzeri (strain A1501) (Pseudomonas stutzeri).